The sequence spans 248 residues: MQVRNILVALVVVCFAVSEAATQAPTSPPDSSASAEQVAQLLNAPSELDRLKLLKDNQFVFDFKNSKLGVTQSAGGKTVATSRTDFPAVIGHNIAMTVGFIEACGINLPHTHPRATEINFIAKGRFQAGFFLENQATFIGHILEEGMATVFPQGAIHFEINLECEPAMFVAAFNNEDPGVQTTASSFFGLPADVAAVSLNISSIQTVEDLAKYLPHNPAIAMKECMQRCGMTGSSESSESSEDSSCSD.

An N-terminal signal peptide occupies residues 1-20 (MQVRNILVALVVVCFAVSEA). In terms of domain architecture, Cupin type-1 spans 61-207 (FDFKNSKLGV…SLNISSIQTV (147 aa)). The Mn(2+) site is built by H110, H112, E117, and H157. An N-linked (GlcNAc...) asparagine glycan is attached at N200.

Belongs to the germin family.

The protein localises to the secreted. It localises to the cell wall. This is Spherulin-1B from Physarum polycephalum (Slime mold).